A 257-amino-acid chain; its full sequence is MKVFPALTSALVALGTAGVEAEHVQRSLVMGGGTVPVGAKTYTVGLRTTAEGDTFCGGALISPTHVLTTATCTASLGSGPAEWAAVGTHYLNGAKDGERLKVVSAQNHTLYNPNNFAYNFAVLTLEKPSKFSPVKLPAADGSDIAPSMSSKLMGWGDTSYPNGARANELQSVELRVVTSNCTYTVGPSEVCAGGEEGKDKCAGDTGGPLIKENGSGDADDILIGLASWGMPCGHKDVASVYARVSAGLEWINSVIKK.

The signal sequence occupies residues 1–28 (MKVFPALTSALVALGTAGVEAEHVQRSL). The Peptidase S1 domain maps to 29-256 (VMGGGTVPVG…GLEWINSVIK (228 aa)). C56 and C72 are joined by a disulfide. Residues N107 and N180 are each glycosylated (N-linked (GlcNAc...) asparagine). 2 disulfide bridges follow: C181/C191 and C201/C232. N213 is a glycosylation site (N-linked (GlcNAc...) asparagine).

It belongs to the peptidase S1 family. As to quaternary structure, interacts with host endoglucanases EGaseA.

Its subcellular location is the secreted. In terms of biological role, secreted effector that suppresses host plant glucan elicitor-mediated defense responses. Targets host endoglucanase EGaseA and inhibits the EGaseA-mediated release of elicitor-active glucan oligosaccharides from P.sojae cell walls. The chain is Glucanase inhibitor protein 1 from Phytophthora sojae (Soybean stem and root rot agent).